We begin with the raw amino-acid sequence, 181 residues long: Photosystem I assembly protein Ycf4 (181 aa).

2 helical membrane passes run 19–41 and 61–83; these read YAWC…GSYF and IVMM…SIFT.

This sequence belongs to the Ycf4 family.

It localises to the plastid. The protein localises to the chloroplast thylakoid membrane. Seems to be required for the assembly of the photosystem I complex. The chain is Photosystem I assembly protein Ycf4 from Guillardia theta (Cryptophyte).